The chain runs to 457 residues: Paired box protein Pax-8 (457 aa).

The segment at residues 9–135 (GHGGLNQLGG…SSINRIIRTK (127 aa)) is a DNA-binding region (paired). The tract at residues 12–68 (GLNQLGGAFVNGRPLPEVVRQRIVDLAHQGVRPCDISRQLRVSHGCVSKILGRYYET) is PAI subdomain. Positions 87-135 (KVVEKIGDYKRQNPTMFAWEIRDRLLAEGVCDNDTVPSVSSINRIIRTK) are RED subdomain. The segment covering 159–182 (LIPSSAVTPPESPQSDSLGSTYSI) has biased composition (polar residues). Residues 159–224 (LIPSSAVTPP…SSSSGPRKHL (66 aa)) are disordered. A Phosphoserine modification is found at serine 304.

In terms of assembly, interacts with WWTR1. As to expression, expressed in the developing excretory system and the thyroid gland.

It is found in the nucleus. Thought to encode a transcription factor. It may have a role in kidney cell differentiation. May play a regulatory role in mammalian development. This is Paired box protein Pax-8 (Pax8) from Mus musculus (Mouse).